The chain runs to 348 residues: Phosphatidylglycerophosphate phosphatase 1, chloroplastic/mitochondrial (348 aa).

The N-terminal 58 residues, 1 to 58 (MQTPSMAASTTSYYPIPKSFLLSPPRHKRNPNLISCSTKPICSPPPPSSSSSSPLQTT), are a transit peptide targeting the chloroplast and mitochondrion. The disordered stretch occupies residues 17 to 67 (PKSFLLSPPRHKRNPNLISCSTKPICSPPPPSSSSSSPLQTTTTHRSQKQN). Positions 55–67 (LQTTTTHRSQKQN) are enriched in polar residues. The Phosphoryl acceptor signature appears at 184–188 (DKDNT).

It belongs to the HAD-like hydrolase superfamily. Requires Mg(2+) as cofactor. As to expression, mainly expressed in inflorescences (especially in pollen) and, to a lower extent, in leaves, stems and siliques, as well as, at low levels, in roots. Mostly expressed in hypocotyl, vasculatures, trichomes, guard cells and stigmas.

The protein resides in the plastid. Its subcellular location is the chloroplast. It localises to the mitochondrion. It carries out the reaction a 1,2-diacyl-sn-glycero-3-phospho-(1'-sn-glycero-3'-phosphate) + H2O = a 1,2-diacyl-sn-glycero-3-phospho-(1'-sn-glycerol) + phosphate. Its pathway is phospholipid metabolism; phosphatidylglycerol biosynthesis; phosphatidylglycerol from CDP-diacylglycerol: step 2/2. In terms of biological role, phosphatidylglycerophosphate (PGP) phosphatase involved in the biosynthesis of phosphatidylglycerol (PG), a phosphoglycerolipid predominantly present in chloroplastic thylakoid membranes and which has important photosynthetic function; seems to use PGP 34:3, PGP 34:2 and PGP 34:1 as substrates. Required for thylakoid membranes development and chloroplast function. Necessary for normal cell growth. Required for root growth and columella cells organization. The sequence is that of Phosphatidylglycerophosphate phosphatase 1, chloroplastic/mitochondrial from Arabidopsis thaliana (Mouse-ear cress).